Reading from the N-terminus, the 381-residue chain is DNA replication and repair protein RecF (381 aa).

30–37 (GENAQGKT) provides a ligand contact to ATP.

The protein belongs to the RecF family.

The protein resides in the cytoplasm. In terms of biological role, the RecF protein is involved in DNA metabolism; it is required for DNA replication and normal SOS inducibility. RecF binds preferentially to single-stranded, linear DNA. It also seems to bind ATP. The sequence is that of DNA replication and repair protein RecF from Lactobacillus delbrueckii subsp. bulgaricus (strain ATCC 11842 / DSM 20081 / BCRC 10696 / JCM 1002 / NBRC 13953 / NCIMB 11778 / NCTC 12712 / WDCM 00102 / Lb 14).